The primary structure comprises 777 residues: Phosphoribosylformylglycinamidine synthase subunit PurL (777 aa).

Residue histidine 50 is part of the active site. Residues tyrosine 53 and lysine 92 each coordinate ATP. Residue glutamate 94 coordinates Mg(2+). Substrate-binding positions include 95-98 and arginine 117; that span reads SHNH. The Proton acceptor role is filled by histidine 96. Aspartate 118 contributes to the Mg(2+) binding site. Residue glutamine 241 coordinates substrate. Aspartate 269 contributes to the Mg(2+) binding site. 313 to 315 is a binding site for substrate; that stretch reads ESQ. Positions 516 and 553 each coordinate ATP. Mg(2+) is bound at residue asparagine 554. Residue serine 556 coordinates substrate.

The protein belongs to the FGAMS family. As to quaternary structure, monomer. Part of the FGAM synthase complex composed of 1 PurL, 1 PurQ and 2 PurS subunits.

It localises to the cytoplasm. The catalysed reaction is N(2)-formyl-N(1)-(5-phospho-beta-D-ribosyl)glycinamide + L-glutamine + ATP + H2O = 2-formamido-N(1)-(5-O-phospho-beta-D-ribosyl)acetamidine + L-glutamate + ADP + phosphate + H(+). It functions in the pathway purine metabolism; IMP biosynthesis via de novo pathway; 5-amino-1-(5-phospho-D-ribosyl)imidazole from N(2)-formyl-N(1)-(5-phospho-D-ribosyl)glycinamide: step 1/2. Its function is as follows. Part of the phosphoribosylformylglycinamidine synthase complex involved in the purines biosynthetic pathway. Catalyzes the ATP-dependent conversion of formylglycinamide ribonucleotide (FGAR) and glutamine to yield formylglycinamidine ribonucleotide (FGAM) and glutamate. The FGAM synthase complex is composed of three subunits. PurQ produces an ammonia molecule by converting glutamine to glutamate. PurL transfers the ammonia molecule to FGAR to form FGAM in an ATP-dependent manner. PurS interacts with PurQ and PurL and is thought to assist in the transfer of the ammonia molecule from PurQ to PurL. In Synechococcus elongatus (strain ATCC 33912 / PCC 7942 / FACHB-805) (Anacystis nidulans R2), this protein is Phosphoribosylformylglycinamidine synthase subunit PurL.